The following is a 122-amino-acid chain: Aspartate 1-decarboxylase (122 aa).

The Schiff-base intermediate with substrate; via pyruvic acid role is filled by Ser-25. Pyruvic acid (Ser) is present on Ser-25. A substrate-binding site is contributed by Thr-57. The active-site Proton donor is the Tyr-58. Substrate is bound at residue 73–75 (GAA).

The protein belongs to the PanD family. In terms of assembly, heterooctamer of four alpha and four beta subunits. Pyruvate is required as a cofactor. Post-translationally, is synthesized initially as an inactive proenzyme, which is activated by self-cleavage at a specific serine bond to produce a beta-subunit with a hydroxyl group at its C-terminus and an alpha-subunit with a pyruvoyl group at its N-terminus.

The protein localises to the cytoplasm. The catalysed reaction is L-aspartate + H(+) = beta-alanine + CO2. It functions in the pathway cofactor biosynthesis; (R)-pantothenate biosynthesis; beta-alanine from L-aspartate: step 1/1. In terms of biological role, catalyzes the pyruvoyl-dependent decarboxylation of aspartate to produce beta-alanine. In Bordetella avium (strain 197N), this protein is Aspartate 1-decarboxylase.